The chain runs to 251 residues: Hydroxyacylglutathione hydrolase (251 aa).

Zn(2+) is bound by residues His53, His55, Asp57, His58, His110, Asp127, and His165.

It belongs to the metallo-beta-lactamase superfamily. Glyoxalase II family. In terms of assembly, monomer. Zn(2+) is required as a cofactor.

It carries out the reaction an S-(2-hydroxyacyl)glutathione + H2O = a 2-hydroxy carboxylate + glutathione + H(+). It participates in secondary metabolite metabolism; methylglyoxal degradation; (R)-lactate from methylglyoxal: step 2/2. Functionally, thiolesterase that catalyzes the hydrolysis of S-D-lactoyl-glutathione to form glutathione and D-lactic acid. This is Hydroxyacylglutathione hydrolase from Salmonella typhi.